Here is a 546-residue protein sequence, read N- to C-terminus: CTP synthase (546 aa).

Positions 1–265 (MTKYVFVTGG…DEIVCHKLGI (265 aa)) are amidoligase domain. S13 serves as a coordination point for CTP. Position 13 (S13) interacts with UTP. ATP is bound by residues 14–19 (SLGKGI) and D71. Residues D71 and E139 each coordinate Mg(2+). CTP-binding positions include 146–148 (DIE), 186–191 (KTKPTQ), and K222. UTP is bound by residues 186–191 (KTKPTQ) and K222. The region spanning 290-543 (DIAFVGKYVD…VKAAIARHSA (254 aa)) is the Glutamine amidotransferase type-1 domain. Position 351 (G351) interacts with L-glutamine. Catalysis depends on C378, which acts as the Nucleophile; for glutamine hydrolysis. L-glutamine-binding positions include 379 to 382 (LGMQ), E402, and R469. Catalysis depends on residues H516 and E518.

This sequence belongs to the CTP synthase family. In terms of assembly, homotetramer.

The catalysed reaction is UTP + L-glutamine + ATP + H2O = CTP + L-glutamate + ADP + phosphate + 2 H(+). It carries out the reaction L-glutamine + H2O = L-glutamate + NH4(+). The enzyme catalyses UTP + NH4(+) + ATP = CTP + ADP + phosphate + 2 H(+). It participates in pyrimidine metabolism; CTP biosynthesis via de novo pathway; CTP from UDP: step 2/2. With respect to regulation, allosterically activated by GTP, when glutamine is the substrate; GTP has no effect on the reaction when ammonia is the substrate. The allosteric effector GTP functions by stabilizing the protein conformation that binds the tetrahedral intermediate(s) formed during glutamine hydrolysis. Inhibited by the product CTP, via allosteric rather than competitive inhibition. Functionally, catalyzes the ATP-dependent amination of UTP to CTP with either L-glutamine or ammonia as the source of nitrogen. Regulates intracellular CTP levels through interactions with the four ribonucleotide triphosphates. This is CTP synthase from Azoarcus sp. (strain BH72).